Consider the following 152-residue polypeptide: UPF0178 protein CKL_3490 (152 aa).

It belongs to the UPF0178 family.

The polypeptide is UPF0178 protein CKL_3490 (Clostridium kluyveri (strain ATCC 8527 / DSM 555 / NBRC 12016 / NCIMB 10680 / K1)).